We begin with the raw amino-acid sequence, 996 residues long: Alanine--tRNA ligase, chloroplastic/mitochondrial (996 aa).

Residues H677, H681, C779, and H783 each coordinate Zn(2+).

It belongs to the class-II aminoacyl-tRNA synthetase family. Monomer. Requires Zn(2+) as cofactor.

The protein localises to the plastid. It is found in the chloroplast. Its subcellular location is the mitochondrion. It catalyses the reaction tRNA(Ala) + L-alanine + ATP = L-alanyl-tRNA(Ala) + AMP + diphosphate. Functionally, catalyzes the attachment of alanine to tRNA(Ala) in a two-step reaction: alanine is first activated by ATP to form Ala-AMP and then transferred to the acceptor end of tRNA(Ala). Also edits incorrectly charged tRNA(Ala) via its editing domain. In Oryza sativa subsp. japonica (Rice), this protein is Alanine--tRNA ligase, chloroplastic/mitochondrial.